A 606-amino-acid polypeptide reads, in one-letter code: Sodium-independent sulfate anion transporter (606 aa).

The Extracellular portion of the chain corresponds to 1–51 (MPSSVTALGQARSSGPGMAPSACCCSPAALQRRLPILAWLPSYSLQWLKMD). The helical transmembrane segment at 52–72 (FVAGLSVGLTAIPQALAYAEV) threads the bilayer. Ala-73 is a topological domain (cytoplasmic). Residues 74-94 (GLPPQYGLYSAFMGCFVYFFL) traverse the membrane as a helical segment. Topologically, residues 95 to 100 (GTSRDV) are extracellular. The helical transmembrane segment at 101–117 (TLGPTAIMSLLVSFYTF) threads the bilayer. The Cytoplasmic portion of the chain corresponds to 118-119 (HE). The chain crosses the membrane as a helical span at residues 120–140 (PAYAVLLAFLSGCIQLAMGVL). The Extracellular portion of the chain corresponds to 141 to 147 (RLGFLLD). A helical transmembrane segment spans residues 148–168 (FISYPVIKGFTSAAAVTIGFG). Residues 169–197 (QIKNLLGLQNIPRPFFLQVYHTFLRIAET) lie on the Cytoplasmic side of the membrane. The helical transmembrane segment at 198–218 (RVGDAVLGLVCMLLLLVLKLM) threads the bilayer. At 219–250 (RDHVPPVHPEMPPGVRLSRGLVWAATTARNAL) the chain is on the extracellular side. Residues 251-271 (VVSFAALVAYSFEVTGYQPFI) traverse the membrane as a helical segment. The Cytoplasmic segment spans residues 272 to 307 (LTGETAEGLPPVRIPPFSVTTANGTISFTEMVQDMG). The chain crosses the membrane as a helical span at residues 308-328 (AGLAVVPLMGLLESIAVAKAF). The Extracellular portion of the chain corresponds to 329 to 341 (ASQNNYRIDANQE). The helical transmembrane segment at 342-362 (LLAIGLTNMLGSLVSSYPVTG) threads the bilayer. The Cytoplasmic segment spans residues 363 to 374 (SFGRTAVNAQSG). The helical transmembrane segment at 375-395 (VCTPAGGLVTGVLVLLSLDYL) threads the bilayer. Residues 396–398 (TSL) lie on the Extracellular side of the membrane. A helical membrane pass occupies residues 399-419 (FYYIPKSALAAVIIMAVAPLF). Over 420 to 441 (DTKIFRTLWRVKRLDLLPLCVT) the chain is Cytoplasmic. The helical transmembrane segment at 442-462 (FLLCFWEVQYGILAGALVSLL) threads the bilayer. Residues 463-606 (MLLHSAARPE…LDQKVALLKA (144 aa)) are Extracellular-facing. The STAS domain occupies 470 to 584 (RPETKVSEGP…EAEKHLRQEP (115 aa)).

It belongs to the SLC26A/SulP transporter (TC 2.A.53) family. As to expression, detected in all tissues tested with highest expression observed in brain, kidney, HEVEC and placenta and lowest in pancreas, skeletal muscle, liver, lung and heart.

It is found in the cell membrane. Its subcellular location is the lysosome membrane. The protein resides in the apical cell membrane. It localises to the basolateral cell membrane. The catalysed reaction is hydrogencarbonate(in) + chloride(out) = hydrogencarbonate(out) + chloride(in). It carries out the reaction sulfate(in) + H(+)(in) = sulfate(out) + H(+)(out). It catalyses the reaction oxalate(in) + chloride(out) = oxalate(out) + chloride(in). Sodium-independent anion exchanger mediating bicarbonate, chloride, sulfate and oxalate transport. Exhibits sodium-independent sulfate anion transporter activity that may cooperate with SLC26A2 to mediate DIDS-sensitive sulfate uptake into high endothelial venules endothelial cells (HEVEC). In the kidney, mediates chloride-bicarbonate exchange, facilitating V-ATPase-mediated acid secretion. May function as a chloride channel, playing an important role in moderating chloride homeostasis and neuronal activity in the cerebellum. The protein is Sodium-independent sulfate anion transporter of Homo sapiens (Human).